The sequence spans 582 residues: Fructose-1,6-bisphosphatase class 3 (582 aa).

The protein belongs to the FBPase class 3 family. Mn(2+) serves as cofactor.

The catalysed reaction is beta-D-fructose 1,6-bisphosphate + H2O = beta-D-fructose 6-phosphate + phosphate. It functions in the pathway carbohydrate biosynthesis; gluconeogenesis. The polypeptide is Fructose-1,6-bisphosphatase class 3 (Saccharophagus degradans (strain 2-40 / ATCC 43961 / DSM 17024)).